We begin with the raw amino-acid sequence, 177 residues long: ATP-dependent protease subunit HslV (177 aa).

The active site involves Thr-6. Na(+)-binding residues include Ala-162, Cys-165, and Thr-168.

It belongs to the peptidase T1B family. HslV subfamily. In terms of assembly, a double ring-shaped homohexamer of HslV is capped on each side by a ring-shaped HslU homohexamer. The assembly of the HslU/HslV complex is dependent on binding of ATP.

Its subcellular location is the cytoplasm. The enzyme catalyses ATP-dependent cleavage of peptide bonds with broad specificity.. Its activity is regulated as follows. Allosterically activated by HslU binding. In terms of biological role, protease subunit of a proteasome-like degradation complex believed to be a general protein degrading machinery. This Desulfovibrio desulfuricans (strain ATCC 27774 / DSM 6949 / MB) protein is ATP-dependent protease subunit HslV.